We begin with the raw amino-acid sequence, 478 residues long: Adenosylhomocysteinase (478 aa).

Substrate-binding residues include threonine 57, aspartate 139, and glutamate 201. Position 202-204 (202-204 (TTT)) interacts with NAD(+). 2 residues coordinate substrate: lysine 231 and aspartate 235. NAD(+) contacts are provided by residues asparagine 236, 265–270 (GYGDVG), glutamate 288, asparagine 323, 344–346 (IGH), and asparagine 392.

Belongs to the adenosylhomocysteinase family. Requires NAD(+) as cofactor.

The protein localises to the cytoplasm. The enzyme catalyses S-adenosyl-L-homocysteine + H2O = L-homocysteine + adenosine. It functions in the pathway amino-acid biosynthesis; L-homocysteine biosynthesis; L-homocysteine from S-adenosyl-L-homocysteine: step 1/1. Functionally, may play a key role in the regulation of the intracellular concentration of adenosylhomocysteine. This chain is Adenosylhomocysteinase, found in Corynebacterium efficiens (strain DSM 44549 / YS-314 / AJ 12310 / JCM 11189 / NBRC 100395).